A 157-amino-acid polypeptide reads, in one-letter code: uncharacterized protein (157 aa).

May be a DNA-binding protein involved in virion nucleoprotein condensation. This is an uncharacterized protein from Mycoplasma (Bacteriophage L2).